The primary structure comprises 266 residues: Glucosamine-6-phosphate deaminase (266 aa).

Residue aspartate 72 is the Proton acceptor; for enolization step of the active site. Aspartate 141 (for ring-opening step) is an active-site residue. Catalysis depends on histidine 143, which acts as the Proton acceptor; for ring-opening step. Catalysis depends on glutamate 148, which acts as the For ring-opening step.

This sequence belongs to the glucosamine/galactosamine-6-phosphate isomerase family. NagB subfamily. In terms of assembly, homohexamer.

The enzyme catalyses alpha-D-glucosamine 6-phosphate + H2O = beta-D-fructose 6-phosphate + NH4(+). It functions in the pathway amino-sugar metabolism; N-acetylneuraminate degradation; D-fructose 6-phosphate from N-acetylneuraminate: step 5/5. Its activity is regulated as follows. Allosterically activated by N-acetylglucosamine 6-phosphate (GlcNAc6P). Functionally, catalyzes the reversible isomerization-deamination of glucosamine 6-phosphate (GlcN6P) to form fructose 6-phosphate (Fru6P) and ammonium ion. The protein is Glucosamine-6-phosphate deaminase of Salmonella typhimurium (strain LT2 / SGSC1412 / ATCC 700720).